The following is a 60-amino-acid chain: Large ribosomal subunit protein bL32 (60 aa).

The span at 1–16 shows a compositional bias: basic residues; that stretch reads MAVPKRKTTPSKRGMR. Positions 1 to 34 are disordered; it reads MAVPKRKTTPSKRGMRRAHDALSSPVYIEDKDSG.

Belongs to the bacterial ribosomal protein bL32 family.

The polypeptide is Large ribosomal subunit protein bL32 (Maricaulis maris (strain MCS10) (Caulobacter maris)).